The following is a 452-amino-acid chain: UDP-glycosyltransferase 76D1 (452 aa).

UDP-alpha-D-glucose is bound by residues S269, 329–331 (APQ), 346–354 (HGGWNSCLE), and 368–371 (SGDQ).

It belongs to the UDP-glycosyltransferase family.

Functionally, possesses low quercetin 7-O-glucosyltransferase activity in vitro. This Arabidopsis thaliana (Mouse-ear cress) protein is UDP-glycosyltransferase 76D1 (UGT76D1).